The sequence spans 269 residues: Phosphonoacetaldehyde hydrolase (269 aa).

Asp9 (nucleophile) is an active-site residue. Mg(2+) contacts are provided by Asp9 and Ala11. Lys50 acts as the Schiff-base intermediate with substrate in catalysis. Mg(2+) is bound at residue Asp184.

It belongs to the HAD-like hydrolase superfamily. PhnX family. Homodimer. It depends on Mg(2+) as a cofactor.

The catalysed reaction is phosphonoacetaldehyde + H2O = acetaldehyde + phosphate + H(+). Its function is as follows. Involved in phosphonate degradation. This chain is Phosphonoacetaldehyde hydrolase, found in Lysinibacillus sphaericus (strain C3-41).